A 161-amino-acid chain; its full sequence is Small ribosomal subunit protein uS9 (161 aa).

2 disordered regions span residues 1 to 27 (MAQISDSLDVAPESFSTETPNEEAPKA) and 142 to 161 (KERKKAGLKKARKAPQFSKR).

The protein belongs to the universal ribosomal protein uS9 family.

The protein is Small ribosomal subunit protein uS9 of Clavibacter michiganensis subsp. michiganensis (strain NCPPB 382).